A 292-amino-acid polypeptide reads, in one-letter code: Formamidopyrimidine-DNA glycosylase (292 aa).

Pro2 serves as the catalytic Schiff-base intermediate with DNA. Glu3 acts as the Proton donor in catalysis. Lys58 acts as the Proton donor; for beta-elimination activity in catalysis. Residues His98, Arg128, and Arg173 each coordinate DNA. An FPG-type zinc finger spans residues 258-292; sequence LVYDRAGQPCRVCATPVRQIVQGQRSTFYCPNCQH. Arg282 acts as the Proton donor; for delta-elimination activity in catalysis.

This sequence belongs to the FPG family. In terms of assembly, monomer. Requires Zn(2+) as cofactor.

It carries out the reaction Hydrolysis of DNA containing ring-opened 7-methylguanine residues, releasing 2,6-diamino-4-hydroxy-5-(N-methyl)formamidopyrimidine.. The catalysed reaction is 2'-deoxyribonucleotide-(2'-deoxyribose 5'-phosphate)-2'-deoxyribonucleotide-DNA = a 3'-end 2'-deoxyribonucleotide-(2,3-dehydro-2,3-deoxyribose 5'-phosphate)-DNA + a 5'-end 5'-phospho-2'-deoxyribonucleoside-DNA + H(+). Its function is as follows. Involved in base excision repair of DNA damaged by oxidation or by mutagenic agents. Acts as a DNA glycosylase that recognizes and removes damaged bases. Has a preference for oxidized purines, such as 7,8-dihydro-8-oxoguanine (8-oxoG). Has AP (apurinic/apyrimidinic) lyase activity and introduces nicks in the DNA strand. Cleaves the DNA backbone by beta-delta elimination to generate a single-strand break at the site of the removed base with both 3'- and 5'-phosphates. The protein is Formamidopyrimidine-DNA glycosylase of Cupriavidus necator (strain ATCC 17699 / DSM 428 / KCTC 22496 / NCIMB 10442 / H16 / Stanier 337) (Ralstonia eutropha).